A 578-amino-acid chain; its full sequence is Triokinase/FMN cyclase (578 aa).

A DhaK domain is found at 9–336 (SVEGCADDAL…IDAETTAKAW (328 aa)). Dihydroxyacetone-binding positions include 56–59 (GSGH), K109, and D114. The active-site Tele-hemiaminal-histidine intermediate is the H221. Residues 372–571 (KQMALVLDRI…AAAIFRAILE (200 aa)) form the DhaL domain. ATP contacts are provided by residues 401 to 404 (DGDC), 446 to 447 (SS), G486, and 494 to 495 (TM). Residues S511 and S545 each carry the phosphoserine modification. 556–558 (DPG) is an ATP binding site.

This sequence belongs to the dihydroxyacetone kinase (DAK) family. As to quaternary structure, homodimer. Interacts with IFIH1 (via the CARD domains), the interaction is inhibited by viral infection. Mg(2+) serves as cofactor. The cofactor is Mn(2+). Requires Co(2+) as cofactor.

The catalysed reaction is dihydroxyacetone + ATP = dihydroxyacetone phosphate + ADP + H(+). It carries out the reaction D-glyceraldehyde + ATP = D-glyceraldehyde 3-phosphate + ADP + H(+). It catalyses the reaction FAD = riboflavin cyclic-4',5'-phosphate + AMP + H(+). Its activity is regulated as follows. Each activity is inhibited by the substrate(s) of the other. Functionally, catalyzes both the phosphorylation of dihydroxyacetone and of glyceraldehyde, and the splitting of ribonucleoside diphosphate-X compounds among which FAD is the best substrate. Represses IFIH1-mediated cellular antiviral response. This Mus musculus (Mouse) protein is Triokinase/FMN cyclase.